The primary structure comprises 90 residues: Protein PRAC2 (90 aa).

Highly expressed in prostate and testis. Also detected in placenta, muscle, colon, peripheral blood leukocytes and skin.

The protein resides in the nucleus. The chain is Protein PRAC2 from Homo sapiens (Human).